We begin with the raw amino-acid sequence, 180 residues long: MINSTIAKRYALSLVQLGAECGLVDRFRGELADVEDLFGTTPEIPAAFADPALSHERKKNIMRELVGSCACSELMGNFLLLLVDKNRVAFFSQIVKAYGQLADEHVGILRPVITTAFELDAVQLAAIREALEKKSAKTIIPQLTVDKAFLGGVVVQIGDTVYDSSVKTQLKRIQDQLQKG.

It belongs to the ATPase delta chain family. In terms of assembly, F-type ATPases have 2 components, F(1) - the catalytic core - and F(0) - the membrane proton channel. F(1) has five subunits: alpha(3), beta(3), gamma(1), delta(1), epsilon(1). F(0) has three main subunits: a(1), b(2) and c(10-14). The alpha and beta chains form an alternating ring which encloses part of the gamma chain. F(1) is attached to F(0) by a central stalk formed by the gamma and epsilon chains, while a peripheral stalk is formed by the delta and b chains.

The protein resides in the cell inner membrane. In terms of biological role, f(1)F(0) ATP synthase produces ATP from ADP in the presence of a proton or sodium gradient. F-type ATPases consist of two structural domains, F(1) containing the extramembraneous catalytic core and F(0) containing the membrane proton channel, linked together by a central stalk and a peripheral stalk. During catalysis, ATP synthesis in the catalytic domain of F(1) is coupled via a rotary mechanism of the central stalk subunits to proton translocation. This protein is part of the stalk that links CF(0) to CF(1). It either transmits conformational changes from CF(0) to CF(1) or is implicated in proton conduction. In Pelobacter propionicus (strain DSM 2379 / NBRC 103807 / OttBd1), this protein is ATP synthase subunit delta.